Here is a 379-residue protein sequence, read N- to C-terminus: Alcohol dehydrogenase class-3 (379 aa).

Ser2 is modified (N-acetylserine). Cys48, His70, Cys100, Cys103, Cys106, Cys114, and Cys177 together coordinate Zn(2+).

This sequence belongs to the zinc-containing alcohol dehydrogenase family. Class-III subfamily. Zn(2+) serves as cofactor.

It carries out the reaction a primary alcohol + NAD(+) = an aldehyde + NADH + H(+). It catalyses the reaction a secondary alcohol + NAD(+) = a ketone + NADH + H(+). The enzyme catalyses S-(hydroxymethyl)glutathione + NADP(+) = S-formylglutathione + NADPH + H(+). The catalysed reaction is S-(hydroxymethyl)glutathione + NAD(+) = S-formylglutathione + NADH + H(+). It carries out the reaction octan-1-ol + NAD(+) = octanal + NADH + H(+). Its function is as follows. Class-III ADH is remarkably ineffective in oxidizing ethanol, but it readily catalyzes the oxidation of long-chain primary alcohols and the oxidation of S-(hydroxymethyl) glutathione. This chain is Alcohol dehydrogenase class-3 (Fdh), found in Drosophila melanogaster (Fruit fly).